A 402-amino-acid polypeptide reads, in one-letter code: Odorant receptor 22c (402 aa).

Over 1-42 the chain is Cytoplasmic; that stretch reads MTDSGQPAIADHFYRIPRISGLIVGLWPQRIRGGGGRPWHAH. A helical transmembrane segment spans residues 43–63; the sequence is LLFVFAFAMVVVGAVGEVSYG. Residues 64–73 lie on the Extracellular side of the membrane; it reads CVHLDNLVVA. The chain crosses the membrane as a helical span at residues 74 to 94; that stretch reads LEAFCPGTTKAVCVLKLWVFF. The Cytoplasmic portion of the chain corresponds to 95–134; that stretch reads RSNRRWAELVQRLRAILWESRRQEAQRMLVGLATTANRLS. A helical transmembrane segment spans residues 135-155; that stretch reads LLLLSSGTATNAAFTLQPLIM. The Extracellular segment spans residues 156–173; it reads GLYRWIVQLPGQTELPFN. The helical transmembrane segment at 174 to 194 threads the bilayer; that stretch reads IILPSFAVQPGVFPLTYVLLT. The Cytoplasmic portion of the chain corresponds to 195–201; the sequence is ASGACTV. The chain crosses the membrane as a helical span at residues 202–222; that stretch reads FAFSFVDGFFICSCLYICGAF. Topologically, residues 223–276 are extracellular; it reads RLVQQDIRRIFADLHGDSVDVFTEEMNAEVRHRLAQVVERHNAIIDFCTDLTRQ. Residues 277–297 traverse the membrane as a helical segment; it reads FTVIVLMHFLSAAFVLCSTIL. Residues 298-307 lie on the Cytoplasmic side of the membrane; it reads DIMLNTSSLS. A helical membrane pass occupies residues 308-328; the sequence is GLTYICYIIAALTQLFLYCFG. Topologically, residues 329-402 are extracellular; sequence GNHVSESSAA…SYITLLKTFL (74 aa).

It belongs to the insect chemoreceptor superfamily. Heteromeric odorant receptor channel (TC 1.A.69) family. Or1a subfamily. As to quaternary structure, interacts with Orco. Complexes exist early in the endomembrane system in olfactory sensory neurons (OSNs), coupling these complexes to the conserved ciliary trafficking pathway. As to expression, not expressed in either the antenna or maxillary palp.

The protein localises to the cell membrane. Odorant receptor which mediates acceptance or avoidance behavior, depending on its substrates. The odorant receptor repertoire encodes a large collection of odor stimuli that vary widely in identity, intensity, and duration. May form a complex with Orco to form odorant-sensing units, providing sensitive and prolonged odorant signaling and calcium permeability. This Drosophila melanogaster (Fruit fly) protein is Odorant receptor 22c (Or22c).